The chain runs to 449 residues: Glucose-6-phosphate isomerase (449 aa).

T38 is modified (phosphothreonine). E290 functions as the Proton donor in the catalytic mechanism. Residues H311 and K425 contribute to the active site.

It belongs to the GPI family.

The protein localises to the cytoplasm. The enzyme catalyses alpha-D-glucose 6-phosphate = beta-D-fructose 6-phosphate. The protein operates within carbohydrate biosynthesis; gluconeogenesis. It functions in the pathway carbohydrate degradation; glycolysis; D-glyceraldehyde 3-phosphate and glycerone phosphate from D-glucose: step 2/4. In terms of biological role, catalyzes the reversible isomerization of glucose-6-phosphate to fructose-6-phosphate. In Geobacillus thermodenitrificans (strain NG80-2), this protein is Glucose-6-phosphate isomerase.